The chain runs to 355 residues: UDP-N-acetylglucosamine--N-acetylmuramyl-(pentapeptide) pyrophosphoryl-undecaprenol N-acetylglucosamine transferase (355 aa).

UDP-N-acetyl-alpha-D-glucosamine is bound by residues 14–16, asparagine 126, arginine 162, serine 190, isoleucine 243, 262–267, and glutamine 288; these read SGG and ALTVSE.

This sequence belongs to the glycosyltransferase 28 family. MurG subfamily.

It is found in the cell inner membrane. It catalyses the reaction di-trans,octa-cis-undecaprenyl diphospho-N-acetyl-alpha-D-muramoyl-L-alanyl-D-glutamyl-meso-2,6-diaminopimeloyl-D-alanyl-D-alanine + UDP-N-acetyl-alpha-D-glucosamine = di-trans,octa-cis-undecaprenyl diphospho-[N-acetyl-alpha-D-glucosaminyl-(1-&gt;4)]-N-acetyl-alpha-D-muramoyl-L-alanyl-D-glutamyl-meso-2,6-diaminopimeloyl-D-alanyl-D-alanine + UDP + H(+). Its pathway is cell wall biogenesis; peptidoglycan biosynthesis. Its function is as follows. Cell wall formation. Catalyzes the transfer of a GlcNAc subunit on undecaprenyl-pyrophosphoryl-MurNAc-pentapeptide (lipid intermediate I) to form undecaprenyl-pyrophosphoryl-MurNAc-(pentapeptide)GlcNAc (lipid intermediate II). The polypeptide is UDP-N-acetylglucosamine--N-acetylmuramyl-(pentapeptide) pyrophosphoryl-undecaprenol N-acetylglucosamine transferase (Blochmanniella pennsylvanica (strain BPEN)).